A 103-amino-acid polypeptide reads, in one-letter code: Gibberellin-regulated protein 13 (103 aa).

A signal peptide spans 1–20; the sequence is MATKLSIIVFSIVVLHLLLS.

Belongs to the GASA family. In terms of processing, six disulfide bonds may be present.

Its subcellular location is the secreted. Functionally, gibberellin-regulated protein that may function in hormonal controlled steps of development such as seed germination, flowering and seed maturation. This Arabidopsis thaliana (Mouse-ear cress) protein is Gibberellin-regulated protein 13 (GASA13).